Reading from the N-terminus, the 233-residue chain is Apoptosis regulator Bcl-2 (233 aa).

Positions 10–30 (DNREIVLKYIHYKLSQRGYDW) match the BH4 motif. Positions 32-86 (AGEDRPPVPPAPAPAAAPAAVAAAGASSHHRPEPPGSAAASEVPPAEGLRPAPPG) are disordered. Positions 87–101 (VHLALRQAGDEFSRR) match the BH3 motif. The BH1 signature appears at 130-149 (ELFRDGVNWGRIVAFFEFGG). The BH2 signature appears at 181-196 (NWIQDNGGWDAFVELY). Residues 208-228 (WISLKTILSLVLVGACITLGA) form a helical membrane-spanning segment.

Belongs to the Bcl-2 family. As to quaternary structure, forms homodimers, and heterodimers with BAX, BAD, BAK and Bcl-X(L). Heterodimerization with BAX requires intact BH1 and BH2 motifs, and is necessary for anti-apoptotic activity. Also interacts with APAF1 and RAF-1. In adult chicken expressed, in thymus, spleen, kidney, heart, ovary and brain, with the highest levels in the thymus. In the embryo, highly levels expressed in all tissues with high levels in the bursa of Fabricius.

It is found in the mitochondrion outer membrane. Its subcellular location is the nucleus membrane. It localises to the endoplasmic reticulum membrane. The protein localises to the cytoplasm. In terms of biological role, suppresses apoptosis in a variety of cell systems including factor-dependent lymphohematopoietic and neural cells. Regulates cell death by controlling the mitochondrial membrane permeability. Appears to function in a feedback loop system with caspases. Inhibits caspase activity either by preventing the release of cytochrome c from the mitochondria and/or by binding to the apoptosis-activating factor (APAF-1). This is Apoptosis regulator Bcl-2 (BCL2) from Gallus gallus (Chicken).